We begin with the raw amino-acid sequence, 546 residues long: Probable protein kinase UbiB (546 aa).

Positions 124–502 (DFDIQPLASA…HVRQSQSRYL (379 aa)) constitute a Protein kinase domain. Residues 130–138 (LASASIAQV) and Lys-153 contribute to the ATP site. The active-site Proton acceptor is Asp-288. The next 2 helical transmembrane spans lie at 501 to 521 (YLLGIGATLLLSGSFLLVNRP) and 522 to 542 (EWGLMPGWLMVGGVVVWLVGW).

Belongs to the ABC1 family. UbiB subfamily.

The protein localises to the cell inner membrane. The protein operates within cofactor biosynthesis; ubiquinone biosynthesis [regulation]. Its function is as follows. Is probably a protein kinase regulator of UbiI activity which is involved in aerobic coenzyme Q (ubiquinone) biosynthesis. This Salmonella agona (strain SL483) protein is Probable protein kinase UbiB.